The sequence spans 166 residues: 2-amino-4-hydroxy-6-hydroxymethyldihydropteridine pyrophosphokinase (166 aa).

This sequence belongs to the HPPK family.

It catalyses the reaction 6-hydroxymethyl-7,8-dihydropterin + ATP = (7,8-dihydropterin-6-yl)methyl diphosphate + AMP + H(+). It participates in cofactor biosynthesis; tetrahydrofolate biosynthesis; 2-amino-4-hydroxy-6-hydroxymethyl-7,8-dihydropteridine diphosphate from 7,8-dihydroneopterin triphosphate: step 4/4. Functionally, catalyzes the transfer of pyrophosphate from adenosine triphosphate (ATP) to 6-hydroxymethyl-7,8-dihydropterin, an enzymatic step in folate biosynthesis pathway. The protein is 2-amino-4-hydroxy-6-hydroxymethyldihydropteridine pyrophosphokinase (folK) of Streptococcus pyogenes serotype M18 (strain MGAS8232).